Consider the following 523-residue polypeptide: Putative glucosylceramidase 1 (523 aa).

Residues 1-23 form the signal peptide; sequence MKSRFLLKIFIFLAVFGVDSVRA. Asparagine 168 is a glycosylation site (N-linked (GlcNAc...) asparagine). Residue glutamate 358 is the Nucleophile of the active site.

This sequence belongs to the glycosyl hydrolase 30 family.

The catalysed reaction is a beta-D-glucosylceramide + H2O = an N-acyl-sphingoid base + D-glucose. It catalyses the reaction a beta-D-glucosyl-(1&lt;-&gt;1')-N-acylsphing-4-enine + H2O = an N-acylsphing-4-enine + D-glucose. It carries out the reaction an N-acyl-1-beta-D-glucosyl-15-methylhexadecasphing-4-enine + H2O = an N-acyl-15-methylhexadecasphing-4-enine + D-glucose. It functions in the pathway lipid metabolism; sphingolipid metabolism. In terms of biological role, glucosylceramidase that catalyzes the hydrolysis of glucosylceramides into free ceramides and glucose. C.elegans contains specific sphingoid bases, which are unique or different in structure compared to the sphingoid bases found in other animals. Two examples of these distinctive compounds are: 15-methylhexadecasphinganine and 15-methylhexadecasphing-4-enine. This Caenorhabditis elegans protein is Putative glucosylceramidase 1 (gba-1).